A 341-amino-acid chain; its full sequence is Probable electron transfer flavoprotein subunit alpha, mitochondrial (341 aa).

FAD is bound at residue 285–313 (LYIAVGIDGAIQHLAGIKDSKVIAAINRD).

This sequence belongs to the ETF alpha-subunit/FixB family. Heterodimer of an alpha and a beta subunit. FAD serves as cofactor.

It is found in the mitochondrion matrix. In terms of biological role, the electron transfer flavoprotein serves as a specific electron acceptor for several dehydrogenases, including five acyl-CoA dehydrogenases, glutaryl-CoA and sarcosine dehydrogenase. It transfers the electrons to the main mitochondrial respiratory chain via ETF-ubiquinone oxidoreductase (ETF dehydrogenase). The chain is Probable electron transfer flavoprotein subunit alpha, mitochondrial from Schizosaccharomyces pombe (strain 972 / ATCC 24843) (Fission yeast).